Reading from the N-terminus, the 345-residue chain is Holliday junction branch migration complex subunit RuvB (345 aa).

The segment at 4 to 185 (TDRLIAPSTQ…FGIVSRLEFY (182 aa)) is large ATPase domain (RuvB-L). Residues leucine 24, arginine 25, glycine 66, lysine 69, threonine 70, threonine 71, 132-134 (EDY), arginine 175, tyrosine 185, and arginine 222 each bind ATP. A Mg(2+)-binding site is contributed by threonine 70. The tract at residues 186-256 (TADELARIVH…IADAALKMLD (71 aa)) is small ATPAse domain (RuvB-S). The tract at residues 259-345 (KLGFDVMDRK…KIGTGELWQQ (87 aa)) is head domain (RuvB-H). 3 residues coordinate DNA: arginine 295, arginine 314, and arginine 319.

Belongs to the RuvB family. Homohexamer. Forms an RuvA(8)-RuvB(12)-Holliday junction (HJ) complex. HJ DNA is sandwiched between 2 RuvA tetramers; dsDNA enters through RuvA and exits via RuvB. An RuvB hexamer assembles on each DNA strand where it exits the tetramer. Each RuvB hexamer is contacted by two RuvA subunits (via domain III) on 2 adjacent RuvB subunits; this complex drives branch migration. In the full resolvosome a probable DNA-RuvA(4)-RuvB(12)-RuvC(2) complex forms which resolves the HJ.

Its subcellular location is the cytoplasm. The catalysed reaction is ATP + H2O = ADP + phosphate + H(+). Functionally, the RuvA-RuvB-RuvC complex processes Holliday junction (HJ) DNA during genetic recombination and DNA repair, while the RuvA-RuvB complex plays an important role in the rescue of blocked DNA replication forks via replication fork reversal (RFR). RuvA specifically binds to HJ cruciform DNA, conferring on it an open structure. The RuvB hexamer acts as an ATP-dependent pump, pulling dsDNA into and through the RuvAB complex. RuvB forms 2 homohexamers on either side of HJ DNA bound by 1 or 2 RuvA tetramers; 4 subunits per hexamer contact DNA at a time. Coordinated motions by a converter formed by DNA-disengaged RuvB subunits stimulates ATP hydrolysis and nucleotide exchange. Immobilization of the converter enables RuvB to convert the ATP-contained energy into a lever motion, pulling 2 nucleotides of DNA out of the RuvA tetramer per ATP hydrolyzed, thus driving DNA branch migration. The RuvB motors rotate together with the DNA substrate, which together with the progressing nucleotide cycle form the mechanistic basis for DNA recombination by continuous HJ branch migration. Branch migration allows RuvC to scan DNA until it finds its consensus sequence, where it cleaves and resolves cruciform DNA. This is Holliday junction branch migration complex subunit RuvB from Methylobacillus flagellatus (strain ATCC 51484 / DSM 6875 / VKM B-1610 / KT).